The chain runs to 267 residues: Transcription factor Spi-B (267 aa).

The segment at 1 to 31 (MLALEAAQLDGPHLSCLYPEGVFYDLDSCKP) is TAD1 (Acidic). The tract at residues 41–62 (LDSTWGWTEAPPAPAIAPYEAF) is TAD2. Residues 174–257 (LRLYQFLLGL…VKRKLTYQFD (84 aa)) constitute a DNA-binding region (ETS).

It belongs to the ETS family. As to quaternary structure, can form homotypic interactions. Interacts with IRF4/Pip. Interacts with JUN. Interacts with TBP. May also interact with CREBBP and EP300. Interacts with NONO/p54(nrb). In terms of tissue distribution, expressed in the medulla of the thymus, the spleen and germinal centers of the lymph nodes. Expressed in B-cells and T-cells, expression increases during B-cell maturation and decreases during T-cell maturation.

The protein localises to the nucleus. In terms of biological role, sequence specific transcriptional activator which binds to the PU-box, a purine-rich DNA sequence (5'-GAGGAA-3') that can act as a lymphoid-specific enhancer. Promotes development of plasmacytoid dendritic cells (pDCs), also known as type 2 DC precursors (pre-DC2) or natural interferon (IFN)-producing cells. These cells have the capacity to produce large amounts of interferon and block viral replication. Required for B-cell receptor (BCR) signaling, which is necessary for normal B-cell development and antigenic stimulation. This chain is Transcription factor Spi-B (Spib), found in Mus musculus (Mouse).